The chain runs to 328 residues: MYNLRNRSFLNLLDFTSKDIKYLLDLSIDLKKSKYAGIEVQKLKGKNIVIIFEKDSTRTRCAFEIAAYDQGANITYLGPKGNQIGVKESMKDTARVLGRMYDAIGFRGFSQETVECLANYSNVPVYNGLTDISHPTQILADLMTIKEHKGSLKGIKIVFCGDGRGNIANSLLKGCAIMGLDFRIFAPKELFPDSNLTLKAKSLALKSGGKITITDSKEEAVKCADVVYTDVWVSMGEESNWEDRINLLKLYQVNKELMCMAKDDAIFMHCLPAFHDLSTVVGRDIFDKYGLDGIEVTEEIFESKNSVVFDVAENRVHAIKAVMVSTLG.

Carbamoyl phosphate is bound by residues 56 to 59, Q83, R107, and 134 to 137; these read STRT and HPTQ. Residues N166, D230, and 234–235 each bind L-ornithine; that span reads SM. Carbamoyl phosphate is bound by residues 270–271 and R315; that span reads CL.

It belongs to the aspartate/ornithine carbamoyltransferase superfamily. OTCase family.

The protein localises to the cytoplasm. It catalyses the reaction carbamoyl phosphate + L-ornithine = L-citrulline + phosphate + H(+). It participates in amino-acid degradation; L-arginine degradation via ADI pathway; carbamoyl phosphate from L-arginine: step 2/2. In terms of biological role, reversibly catalyzes the transfer of the carbamoyl group from carbamoyl phosphate (CP) to the N(epsilon) atom of ornithine (ORN) to produce L-citrulline. This is Ornithine carbamoyltransferase, catabolic (arcB) from Borreliella afzelii (Borrelia afzelii).